Reading from the N-terminus, the 335-residue chain is Phosphate acyltransferase (335 aa).

It belongs to the PlsX family. In terms of assembly, homodimer. Probably interacts with PlsY.

It localises to the cytoplasm. The enzyme catalyses a fatty acyl-[ACP] + phosphate = an acyl phosphate + holo-[ACP]. Its pathway is lipid metabolism; phospholipid metabolism. In terms of biological role, catalyzes the reversible formation of acyl-phosphate (acyl-PO(4)) from acyl-[acyl-carrier-protein] (acyl-ACP). This enzyme utilizes acyl-ACP as fatty acyl donor, but not acyl-CoA. The sequence is that of Phosphate acyltransferase from Streptococcus equi subsp. zooepidemicus (strain H70).